We begin with the raw amino-acid sequence, 38 residues long: Photosystem II reaction center protein L (38 aa).

A helical membrane pass occupies residues 17–37; that stretch reads SLYWGLLLIFVLAILFSSYIF.

Belongs to the PsbL family. PSII is composed of 1 copy each of membrane proteins PsbA, PsbB, PsbC, PsbD, PsbE, PsbF, PsbH, PsbI, PsbJ, PsbK, PsbL, PsbM, PsbT, PsbX, PsbY, PsbZ, Psb30/Ycf12, at least 3 peripheral proteins of the oxygen-evolving complex and a large number of cofactors. It forms dimeric complexes.

The protein localises to the plastid. The protein resides in the chloroplast thylakoid membrane. One of the components of the core complex of photosystem II (PSII). PSII is a light-driven water:plastoquinone oxidoreductase that uses light energy to abstract electrons from H(2)O, generating O(2) and a proton gradient subsequently used for ATP formation. It consists of a core antenna complex that captures photons, and an electron transfer chain that converts photonic excitation into a charge separation. This subunit is found at the monomer-monomer interface and is required for correct PSII assembly and/or dimerization. This chain is Photosystem II reaction center protein L, found in Nephroselmis olivacea (Green alga).